The chain runs to 393 residues: Acyltransferase ato1 (393 aa).

It belongs to the lysine N-acyltransferase mbtK family.

It functions in the pathway siderophore biosynthesis; ferrichrome biosynthesis. In terms of biological role, L-ornithine N(5)-monooxygenase; part of the siderophore biosynthetic pathway. Omphalotus olearius produces ferrichrome A, but no other siderophore has been detected. Ferrichrome A consists of a hexapeptide ring made up of one glycine, two serine, and three N(5)-hydroxyornithine amino acid residues, the latter acylated by trans-(alpha-methyl)-glutaconic acid residues. The biosynthesis of ferrichrome A depends on the hydroxylation of ornithine to N(5)-hydroxyornithine, catalyzed by the monooxygenase omo1. The second step, the acylation of N(5)-hydroxy-L-ornithine is probably catalyzed by the N-acyltransferase ato1. Finally, assembly of ferrichrome A is catalyzed by the nonribosomal peptide synthase (NRPS) fso1. This Omphalotus olearius (Jack o'lantern) protein is Acyltransferase ato1.